A 149-amino-acid chain; its full sequence is Oligosaccharyltransferase complex subunit ostc-B (149 aa).

Residues 1–32 (MESLYRIPFTVLECPNLKLKKPSWLHMPSAMT) lie on the Cytoplasmic side of the membrane. Residues 33–53 (VYAMVVVSYFLITGGIIYDVI) traverse the membrane as a helical segment. Over 54 to 83 (VEPPSVGSMTDEHGHQRPVAFLAYRVNGQY) the chain is Extracellular. The helical transmembrane segment at 84-104 (IMEGLASSFLFTMGGLGFIIL) threads the bilayer. Over 105–117 (DRSNAPNIPKLNR) the chain is Cytoplasmic. Residues 118–138 (FLLLFIGFVCVLLSFFMARVF) traverse the membrane as a helical segment. At 139–149 (MRMKLPGYLMG) the chain is on the extracellular side.

It belongs to the OSTC family. Specific component of the STT3A-containing form of the oligosaccharyltransferase (OST) complex.

It is found in the membrane. Its pathway is protein modification; protein glycosylation. Specific component of the STT3A-containing form of the oligosaccharyl transferase (OST) complex that catalyzes the initial transfer of a defined glycan (Glc(3)Man(9)GlcNAc(2) in eukaryotes) from the lipid carrier dolichol-pyrophosphate to an asparagine residue within an Asn-X-Ser/Thr consensus motif in nascent polypeptide chains, the first step in protein N-glycosylation. N-glycosylation occurs cotranslationally and the complex associates with the Sec61 complex at the channel-forming translocon complex that mediates protein translocation across the endoplasmic reticulum (ER). All subunits are required for a maximal enzyme activity. This is Oligosaccharyltransferase complex subunit ostc-B from Xenopus laevis (African clawed frog).